The primary structure comprises 191 residues: uncharacterized protein (191 aa).

One can recognise an HTH tetR-type domain in the interval 3–63 (IDRKKLILEA…EIFTTLLKEM (61 aa)). The H-T-H motif DNA-binding region spans 26–45 (TMDLVAKLANVGKGTIYTFF).

This is an uncharacterized protein from Bacillus subtilis (strain 168).